The following is a 292-amino-acid chain: Nitrogenase iron protein 2 (292 aa).

8 to 15 (GKGGIGKS) contacts ATP. Residue Cys-106 coordinates [4Fe-4S] cluster. Residue Arg-109 is modified to ADP-ribosylarginine; by dinitrogenase reductase ADP-ribosyltransferase. Cys-142 contacts [4Fe-4S] cluster.

The protein belongs to the NifH/BchL/ChlL family. Homodimer. [4Fe-4S] cluster is required as a cofactor. The reversible ADP-ribosylation of Arg-109 inactivates the nitrogenase reductase and regulates nitrogenase activity.

The enzyme catalyses N2 + 8 reduced [2Fe-2S]-[ferredoxin] + 16 ATP + 16 H2O = H2 + 8 oxidized [2Fe-2S]-[ferredoxin] + 2 NH4(+) + 16 ADP + 16 phosphate + 6 H(+). Its function is as follows. The key enzymatic reactions in nitrogen fixation are catalyzed by the nitrogenase complex, which has 2 components: the iron protein and the molybdenum-iron protein. This chain is Nitrogenase iron protein 2 (nifH2), found in Methanothermococcus thermolithotrophicus (Methanococcus thermolithotrophicus).